The following is a 212-amino-acid chain: N-(5'-phosphoribosyl)anthranilate isomerase (212 aa).

The protein belongs to the TrpF family.

The catalysed reaction is N-(5-phospho-beta-D-ribosyl)anthranilate = 1-(2-carboxyphenylamino)-1-deoxy-D-ribulose 5-phosphate. Its pathway is amino-acid biosynthesis; L-tryptophan biosynthesis; L-tryptophan from chorismate: step 3/5. The chain is N-(5'-phosphoribosyl)anthranilate isomerase from Myxococcus xanthus (strain DK1622).